The following is a 666-amino-acid chain: Amyloid beta A4 precursor protein-binding family B member 1-interacting protein (666 aa).

The residue at position 55 (S55) is a Phosphoserine. The interval 122 to 155 is disordered; sequence SQYEDDLPPPPADPVLDLPLPPPPPEPLSQEEEE. Residues 129–148 show a composition bias toward pro residues; it reads PPPPADPVLDLPLPPPPPEP. A Ras-associating domain is found at 176–263; sequence KKLVVKVHMN…KILFLEKEEK (88 aa). The region spanning 310–419 is the PH domain; sequence VPELEGALYL…WVMGIRIAKY (110 aa). Positions 448-666 are disordered; that stretch reads AAAPAQPSTG…ALQKKRGNVS (219 aa). The segment covering 453-478 has biased composition (polar residues); sequence QPSTGPKTGTTQPNGQIPQATHSVSA. A compositionally biased stretch (basic and acidic residues) spans 483 to 504; it reads AQRHAETSKDKKPALGNHHDPA. Position 526 is a phosphoserine (S526). T528 is subject to Phosphothreonine. Phosphoserine is present on S531. Pro residues-rich tracts occupy residues 547–589 and 598–631; these read PAPP…PPPS and LPPP…PVPP.

Belongs to the MRL family. As to quaternary structure, interacts, through the N-terminal Pro-rich region, with the WW domain of APBB1. Interacts with RAP1A, PFN1, TLN1, VASP, VCL and ENAH. As to expression, widely expressed with high expression in thymus, spleen, lymph node, bone marrow and peripheral leukocytes.

It localises to the cell membrane. The protein localises to the cell projection. It is found in the lamellipodium. The protein resides in the cell junction. Its subcellular location is the focal adhesion. It localises to the cytoplasm. The protein localises to the cytoskeleton. Functionally, appears to function in the signal transduction from Ras activation to actin cytoskeletal remodeling. Suppresses insulin-induced promoter activities through AP1 and SRE. Mediates Rap1-induced adhesion. The protein is Amyloid beta A4 precursor protein-binding family B member 1-interacting protein (APBB1IP) of Homo sapiens (Human).